The primary structure comprises 648 residues: Protein associated with UVRAG as autophagy enhancer (648 aa).

2 stretches are compositionally biased toward polar residues: residues 131 to 146 (QESL…TSPS) and 157 to 173 (PHLT…SSSR). The tract at residues 131-173 (QESLLKNPKTVATSPSPKEGSARSESPHLTASTDDGDARSSSR) is disordered. A Phosphoserine modification is found at serine 144. The tract at residues 183–222 (ETFMLPADVEKENLHFYAADIIISVIENMKCNLPNQQQPE) is interaction with UVRAG. N6-acetyllysine is present on residues lysine 469, lysine 509, lysine 519, lysine 559, and lysine 619.

In terms of assembly, interacts with UVRAG; the interaction is direct and promotes association with the PI3K/PI3KC3 and HOPS complexes. Interacts with STX17. Phosphorylated by MTOR at Ser-144 under nutrient-rich conditions. Phosphorylation prevents acetylation by KAT5/TIP60 and impairs RUBCNL/PACER function and autophagosome maturation. Under autophagy induction, Phosphorylation by MTOR is repressed, enabling acetylation by KAT5/TIP60. In terms of processing, acetylated by KAT5/TIP60 under autophagy induction, promoting autophagosome maturation and lipid metabolism. Acetylation is prevented by phosphorylation by MTOR. Lys-469 and Lys-559 constitute the key sites for tuning function in autophagy.

The protein localises to the cytoplasmic vesicle. It localises to the autophagosome membrane. In terms of biological role, regulator of autophagy that promotes autophagosome maturation by facilitating the biogenesis of phosphatidylinositol 3-phosphate (PtdIns(3)P) in late steps of autophagy. Acts by antagonizing RUBCN, thereby stimulating phosphatidylinositol 3-kinase activity of the PI3K/PI3KC3 complex. Following anchorage to the autophagosomal SNARE STX17, promotes the recruitment of PI3K/PI3KC3 and HOPS complexes to the autophagosome to regulate the fusion specificity of autophagosomes with late endosomes/lysosomes. Binds phosphoinositides phosphatidylinositol 3-phosphate (PtdIns(3)P), 4-phosphate (PtdIns(4)P) and 5-phosphate (PtdIns(5)P). In addition to its role in autophagy, acts as a regulator of lipid and glycogen homeostasis. May act as a tumor suppressor. The polypeptide is Protein associated with UVRAG as autophagy enhancer (Mus musculus (Mouse)).